The primary structure comprises 284 residues: D-tagatose-1,6-bisphosphate aldolase subunit GatY (284 aa).

Catalysis depends on aspartate 82, which acts as the Proton donor. Zn(2+) contacts are provided by histidine 83 and histidine 180. Dihydroxyacetone phosphate is bound at residue glycine 181. Histidine 208 serves as a coordination point for Zn(2+). Dihydroxyacetone phosphate-binding positions include 209 to 211 and 230 to 233; these read GAS and NVAT.

It belongs to the class II fructose-bisphosphate aldolase family. TagBP aldolase GatY subfamily. Forms a complex with GatZ. It depends on Zn(2+) as a cofactor.

It catalyses the reaction D-tagatofuranose 1,6-bisphosphate = D-glyceraldehyde 3-phosphate + dihydroxyacetone phosphate. The protein operates within carbohydrate metabolism; D-tagatose 6-phosphate degradation; D-glyceraldehyde 3-phosphate and glycerone phosphate from D-tagatose 6-phosphate: step 2/2. In terms of biological role, catalytic subunit of the tagatose-1,6-bisphosphate aldolase GatYZ, which catalyzes the reversible aldol condensation of dihydroxyacetone phosphate (DHAP or glycerone-phosphate) with glyceraldehyde 3-phosphate (G3P) to produce tagatose 1,6-bisphosphate (TBP). Requires GatZ subunit for full activity and stability. Is involved in the catabolism of galactitol. The polypeptide is D-tagatose-1,6-bisphosphate aldolase subunit GatY (Escherichia coli O6:H1 (strain CFT073 / ATCC 700928 / UPEC)).